The following is a 219-amino-acid chain: Small ribosomal subunit protein uS3 (219 aa).

In terms of domain architecture, KH type-2 spans 38–106 (VRKFVKTKLQ…QVAVNIVEVK (69 aa)).

It belongs to the universal ribosomal protein uS3 family. In terms of assembly, part of the 30S ribosomal subunit. Forms a tight complex with proteins S10 and S14.

Functionally, binds the lower part of the 30S subunit head. Binds mRNA in the 70S ribosome, positioning it for translation. In Desulfitobacterium hafniense (strain DSM 10664 / DCB-2), this protein is Small ribosomal subunit protein uS3.